Consider the following 2379-residue polypeptide: Serine/threonine-protein kinase MEC1 (2379 aa).

Residues L1410–S1955 enclose the FAT domain. In terms of domain architecture, PI3K/PI4K catalytic spans F2060–T2363. Residues I2066 to K2072 form a G-loop region. The catalytic loop stretch occupies residues G2232–N2240. An activation loop region spans residues H2252–T2276. In terms of domain architecture, FATC spans L2347 to W2379.

The protein belongs to the PI3/PI4-kinase family. ATM subfamily.

It localises to the nucleus. It carries out the reaction L-seryl-[protein] + ATP = O-phospho-L-seryl-[protein] + ADP + H(+). The enzyme catalyses L-threonyl-[protein] + ATP = O-phospho-L-threonyl-[protein] + ADP + H(+). Functionally, serine/threonine protein kinase which activates checkpoint signaling upon genotoxic stresses such as ionizing radiation (IR), ultraviolet light (UV), or DNA replication stalling, thereby acting as a DNA damage sensor. Recognizes the substrate consensus sequence [ST]-Q. Recruited to DNA lesions in order to initiate the DNA repair by homologous recombination. Phosphorylates histone H2A to form H2AS128ph (gamma-H2A) at sites of DNA damage, also involved in the regulation of DNA damage response mechanism. Required for cell growth and meiotic recombination. This chain is Serine/threonine-protein kinase MEC1 (MEC1), found in Candida glabrata (strain ATCC 2001 / BCRC 20586 / JCM 3761 / NBRC 0622 / NRRL Y-65 / CBS 138) (Yeast).